The primary structure comprises 381 residues: MAKQLEKSSKIGNEDVFQKIANHEQIVFCNDPVSGLQAIIAIHDTTLGPALGGTRMYPYKNVDEALEDVLRLSEGMTYKCAAADIDFGGGKAVIIGDPEKDKSPALFRAFGQFVESLNGRFYTGTDMGTTMDDFVHAQKETNFINGIPEQYGGSGDSSIPTAQGVIYALKATNQYLFGSDSLSGKTYAIQGLGKVGYKVAEQLLKAGADLFVTDIHENVLNSIKQKSEELGGSVTIVKSDDIYSVQADIFVPCAMGGIINDKTIPKLKVKAVVGSANNQLKDLRHANVLNEKGILYAPDYIVNAGGLIQVADELYGPNKERVLLKTKEIYRSLLEIFNQAALDCITTVEAANRKCQKTIEGQQTRNSFFSRGRRPKWNIKE.

Arg55 contacts NAD(+). Residue Lys79 participates in L-phenylalanine binding. The active site involves Lys91. NAD(+) contacts are provided by residues Asp126, Ser157, Thr161, 191-197 (GLGKVGY), 214-215 (DI), 254-255 (AM), and 275-277 (SAN). Asn277 serves as a coordination point for L-phenylalanine.

Belongs to the Glu/Leu/Phe/Val dehydrogenases family.

It catalyses the reaction L-phenylalanine + NAD(+) + H2O = 3-phenylpyruvate + NH4(+) + NADH + H(+). It participates in amino-acid biosynthesis; L-phenylalanine biosynthesis; L-phenylalanine from phenylpyruvate (PDH route): step 1/1. Catalyzes the reversible NAD(+)-dependent oxidative deamination of L-phenylalanine to phenylpyruvate. The polypeptide is Phenylalanine dehydrogenase (Lysinibacillus sphaericus (Bacillus sphaericus)).